The sequence spans 698 residues: DNA ligase (698 aa).

Residues 35–39 (DSVYD), 84–85 (SL), and glutamate 123 each bind NAD(+). Lysine 125 acts as the N6-AMP-lysine intermediate in catalysis. NAD(+) is bound by residues arginine 146, glutamate 183, lysine 302, and lysine 326. Zn(2+)-binding residues include cysteine 420, cysteine 423, cysteine 438, and cysteine 443. Residues 612–698 (NGKGHLNGQT…QNSADTIHLL (87 aa)) form the BRCT domain.

It belongs to the NAD-dependent DNA ligase family. LigA subfamily. It depends on Mg(2+) as a cofactor. The cofactor is Mn(2+).

It catalyses the reaction NAD(+) + (deoxyribonucleotide)n-3'-hydroxyl + 5'-phospho-(deoxyribonucleotide)m = (deoxyribonucleotide)n+m + AMP + beta-nicotinamide D-nucleotide.. In terms of biological role, DNA ligase that catalyzes the formation of phosphodiester linkages between 5'-phosphoryl and 3'-hydroxyl groups in double-stranded DNA using NAD as a coenzyme and as the energy source for the reaction. It is essential for DNA replication and repair of damaged DNA. This Synechococcus sp. (strain WH7803) protein is DNA ligase.